Consider the following 315-residue polypeptide: Sulfate adenylyltransferase subunit 2 1 (315 aa).

Residues 287-315 (DSSSSERQGRAIDHDQSGSMERKKREGYF) form a disordered region. The segment covering 293–315 (RQGRAIDHDQSGSMERKKREGYF) has biased composition (basic and acidic residues).

The protein belongs to the PAPS reductase family. CysD subfamily. As to quaternary structure, heterodimer composed of CysD, the smaller subunit, and CysN.

It catalyses the reaction sulfate + ATP + H(+) = adenosine 5'-phosphosulfate + diphosphate. The protein operates within sulfur metabolism; hydrogen sulfide biosynthesis; sulfite from sulfate: step 1/3. Functionally, with CysN forms the ATP sulfurylase (ATPS) that catalyzes the adenylation of sulfate producing adenosine 5'-phosphosulfate (APS) and diphosphate, the first enzymatic step in sulfur assimilation pathway. APS synthesis involves the formation of a high-energy phosphoric-sulfuric acid anhydride bond driven by GTP hydrolysis by CysN coupled to ATP hydrolysis by CysD. The sequence is that of Sulfate adenylyltransferase subunit 2 1 from Alkalilimnicola ehrlichii (strain ATCC BAA-1101 / DSM 17681 / MLHE-1).